The primary structure comprises 433 residues: MSLPKELEKVLEITKAQNVWRRTQTLNLIASENVMSPLAESVYMSDFMSRYAEGKPYKRYYQGTKYTDEIETLTMELMNEITNSKDCDLRPTSGTIANAAVFRVLAEPGDKALIAPVQAGAHVSHTKFGTLGALGIQHIEMPFDEENINVDVDKAIKMIEEVKPKFVVLGGSLYLFPHPTKELAQHVHAVGAKLVYDAAHVYGLIEGKVWSNPLKDGADIMTVSTHKTFPGPQGGAIFSDGSEVFKQVSKTIFPWFVSNHHLHRLPATAVTAIEMKYFGESYANQILRNSKALAEALAERGFKVIGENLGYTKSHQVAVDVRQFGGGNKIAKLLEDANIIVNKNLLPYDKPEDVSDPSGLRIGVQEMTRYGMKEGEMEEIAELFKKVIIDKKDVNEVKKEVIEMRRNFLEVKYTFDDMKDLEKYSSKSLKLII.

A121–V123 is a (6S)-5,6,7,8-tetrahydrofolate binding site. K227 bears the N6-(pyridoxal phosphate)lysine mark. E243 serves as a coordination point for (6S)-5,6,7,8-tetrahydrofolate.

This sequence belongs to the SHMT family. As to quaternary structure, homodimer. Pyridoxal 5'-phosphate is required as a cofactor.

It is found in the cytoplasm. The catalysed reaction is 5,10-methylenetetrahydrosulfopterin + glycine + H2O = tetrahydrosulfopterin + L-serine. It functions in the pathway amino-acid biosynthesis; glycine biosynthesis; glycine from L-serine: step 1/1. Its activity is regulated as follows. Is completely inhibited by addition of NaCNBH(3) in vitro; this reagent is a known inhibitor of PLP enzymes, that reduces the internal aldimine of PLP to the catalytically inactive and stable secondary amine. Is also inhibited by L-cysteine, which forms a thiazolidine complex with the active site PLP. Catalyzes the reversible interconversion of serine and glycine with the modified folate sulfopterin serving as the one-carbon carrier. Cannot use tetrahydrofolate (THF or H4PteGlu) as the pteridine substrate. Also exhibits a pteridine-independent aldolase activity toward beta-hydroxyamino acids, producing glycine and aldehydes, via a retro-aldol mechanism. Thus, is able to catalyze the cleavage of both allo-threonine and beta-phenylserine. This is Serine hydroxymethyltransferase from Saccharolobus solfataricus (strain ATCC 35092 / DSM 1617 / JCM 11322 / P2) (Sulfolobus solfataricus).